A 474-amino-acid polypeptide reads, in one-letter code: ATP synthase subunit beta 1 (474 aa).

157-164 (GGAGVGKT) contacts ATP.

The protein belongs to the ATPase alpha/beta chains family. F-type ATPases have 2 components, CF(1) - the catalytic core - and CF(0) - the membrane proton channel. CF(1) has five subunits: alpha(3), beta(3), gamma(1), delta(1), epsilon(1). CF(0) has three main subunits: a(1), b(2) and c(9-12). The alpha and beta chains form an alternating ring which encloses part of the gamma chain. CF(1) is attached to CF(0) by a central stalk formed by the gamma and epsilon chains, while a peripheral stalk is formed by the delta and b chains.

It localises to the cell inner membrane. It carries out the reaction ATP + H2O + 4 H(+)(in) = ADP + phosphate + 5 H(+)(out). Functionally, produces ATP from ADP in the presence of a proton gradient across the membrane. The catalytic sites are hosted primarily by the beta subunits. The protein is ATP synthase subunit beta 1 of Polaromonas naphthalenivorans (strain CJ2).